We begin with the raw amino-acid sequence, 203 residues long: V-type ATP synthase subunit D (203 aa).

It belongs to the V-ATPase D subunit family.

Functionally, produces ATP from ADP in the presence of a proton gradient across the membrane. This Chlamydia muridarum (strain MoPn / Nigg) protein is V-type ATP synthase subunit D (atpD).